The following is a 165-amino-acid chain: Inorganic pyrophosphatase (165 aa).

Substrate contacts are provided by K21, R35, and Y47. D57, D62, and D94 together coordinate Mg(2+). Y131 is a binding site for substrate.

Belongs to the PPase family. As to quaternary structure, homotrimer. In presence of divalent cations the trimers aggregate to form a hexamer. It depends on Mg(2+) as a cofactor.

The protein resides in the cytoplasm. The catalysed reaction is diphosphate + H2O = 2 phosphate + H(+). Functionally, catalyzes the hydrolysis of inorganic pyrophosphate (PPi) forming two phosphate ions. The chain is Inorganic pyrophosphatase from Bacillus sp. (strain PS3).